Consider the following 576-residue polypeptide: MDAFATSPTTALFETVNCNAHVAPMAGEDSSENRPASNYKPSTWDYEFLQSLATTNNTVGEKHTRMADKLKEEVKSMMKGTMEPVAKLELINIVQRLGLKYRFESEIKEELFSLYKDGTDAWWVGNLHATALRFRLLRENGIFVPQDVFETFKDKSGEFKSQLCKDVRGLLSLYEASYLGWEGEELLDEAKKFSTTNLNNVKESISSNTLGRLVKHALNLPLHWSAARYEARWFIDEYEREENVIPNLLKYAKLDFNVVQSIHQKELGNLARWWVETGLDKLGFVRNTLMQNFMWGCAMAFEPQYGKVRDAAVKLGSLITMVDDVYDVYGTLEELEIFTDIVDRWDINGIDKLPRNISMIVLTMFNTANQISYDLLRDRGFNSIPHIAEAWATLCKTYLKEAKWYHSGYKPTLEEYLENGLVSISFVLSLVTAYLQTERLENLTYESAAYVNSVPPLVRYSGLLNRLYNDLGTSSAEIARGDTLKSIQCYMTQTGATEEVAREHIKGLVHEAWKGMNRCLFEQTPLAEPFVGFNVNTVRGSQFFYQHGDGYAVTESWTKDLSLSVLIHPIPLNEED.

(2E,6E)-farnesyl diphosphate-binding residues include Arg286, Asp323, Asp327, Arg466, and Asn469. Residues Asp323 and Asp327 each contribute to the Mg(2+) site. The short motif at 323-327 is the DDXXD motif element; that stretch reads DDVYD. 3 residues coordinate Mg(2+): Asn469, Thr473, and Glu477.

This sequence belongs to the terpene synthase family. Tpsb subfamily. Mg(2+) is required as a cofactor. It depends on Mn(2+) as a cofactor.

Functionally, produces a mixture of beta-bisabolene and alpha-bisabolol, along with traces of alpha-bisabolene and farnesene isomers from (2E,6E)-farnesyl diphosphate in fragrance biosynthesis. This Santalum spicatum (Australian sandalwood) protein is Alpha-bisabolol synthase.